The sequence spans 262 residues: 5-methyltetrahydrofolate:corrinoid/iron-sulfur protein co-methyltransferase (262 aa).

The Pterin-binding domain occupies 1 to 246; sequence MLIIGERING…ETAATAEILL (246 aa). Positions 96 and 160 each coordinate (6S)-5-methyl-5,6,7,8-tetrahydrofolate. Lys-184 is a Ca(2+) binding site. Residues Asn-199, Gln-202, and Arg-207 each contribute to the (6S)-5-methyl-5,6,7,8-tetrahydrofolate site. 202 to 203 is a binding site for methylcob(III)alamin; the sequence is QN. The Ca(2+) site is built by Gly-222 and Asp-224.

The protein belongs to the vitamin-B12 dependent methionine synthase family. In terms of assembly, heterohexamer composed of 2 subunits of AcsC, 2 subunits of AcsD and 2 subunits of AcsE. Requires Ca(2+) as cofactor.

It catalyses the reaction methyl-Co(III)-[corrinoid Fe-S protein] + (6S)-5,6,7,8-tetrahydrofolate = Co(I)-[corrinoid Fe-S protein] + (6S)-5-methyl-5,6,7,8-tetrahydrofolate + H(+). Functionally, methyltransferase that mediates the transfer of a N5-methyl group of (6S)-methyltetrahydrofolate to the 5-methoxybenzimidazolylcobamide cofactor of a corrinoid/Fe-S protein (AcsC/AcsD) in the anaerobic acetyl-CoA pathway (Wood-Ljungdahl pathway) of carbon monoxide and carbon dioxide fixation. This is 5-methyltetrahydrofolate:corrinoid/iron-sulfur protein co-methyltransferase (acsE) from Moorella thermoacetica (Clostridium thermoaceticum).